Consider the following 252-residue polypeptide: Mediator of RNA polymerase II transcription subunit 4 (252 aa).

Coiled coils occupy residues 5-31 (KKSTKERLESLLDDLEVLSREVIETLA) and 70-112 (KTHQ…QAKE). Positions 213-252 (MLPPNHSNEFLMESLGPNKENEEDVEVMSTDSSSSSSDSD) are disordered. Low complexity predominate over residues 241–252 (STDSSSSSSDSD).

Belongs to the Mediator complex subunit 4 family. Component of the Mediator complex.

The protein resides in the nucleus. In terms of biological role, component of the Mediator complex, a coactivator involved in the regulated transcription of nearly all RNA polymerase II-dependent genes. Mediator functions as a bridge to convey information from gene-specific regulatory proteins to the basal RNA polymerase II transcription machinery. Mediator is recruited to promoters by direct interactions with regulatory proteins and serves as a scaffold for the assembly of a functional preinitiation complex with RNA polymerase II and the general transcription factors. In Xenopus laevis (African clawed frog), this protein is Mediator of RNA polymerase II transcription subunit 4 (med4).